The following is a 97-amino-acid chain: Protein Vpr (97 aa).

Positions 1-42 are homooligomerization; the sequence is MEQAPENQGPAKEPFNEWALELLEELKAEAVRHFPRPWLHAL. 3 positions are modified to phosphoserine; by host: Ser-79, Ser-95, and Ser-97.

This sequence belongs to the HIV-1 VPR protein family. In terms of assembly, homooligomer, may form homodimer. Interacts with p6-gag region of the Pr55 Gag precursor protein through a (Leu-X-X)4 motif near the C-terminus of the P6gag protein. Interacts with host UNG. May interact with host RAD23A/HHR23A. Interacts with host VPRBP/DCAF1, leading to hijack the CUL4A-RBX1-DDB1-DCAF1/VPRBP complex, mediating ubiquitination of host proteins such as TERT and ZGPAT and arrest of the cell cycle in G2 phase. Phosphorylated on several residues by host. These phosphorylations regulate VPR activity for the nuclear import of the HIV-1 pre-integration complex.

It is found in the virion. It localises to the host nucleus. The protein localises to the host extracellular space. Functionally, during virus replication, may deplete host UNG protein, and incude G2-M cell cycle arrest. Acts by targeting specific host proteins for degradation by the 26S proteasome, through association with the cellular CUL4A-DDB1 E3 ligase complex by direct interaction with host VPRPB/DCAF-1. Cell cycle arrest reportedly occurs within hours of infection and is not blocked by antiviral agents, suggesting that it is initiated by the VPR carried into the virion. Additionally, VPR induces apoptosis in a cell cycle dependent manner suggesting that these two effects are mechanistically linked. Detected in the serum and cerebrospinal fluid of AIDS patient, VPR may also induce cell death to bystander cells. In terms of biological role, during virus entry, plays a role in the transport of the viral pre-integration (PIC) complex to the host nucleus. This function is crucial for viral infection of non-dividing macrophages. May act directly at the nuclear pore complex, by binding nucleoporins phenylalanine-glycine (FG)-repeat regions. The chain is Protein Vpr from Human immunodeficiency virus type 1 group O (isolate ANT70) (HIV-1).